A 125-amino-acid polypeptide reads, in one-letter code: Phosphoribosyl-AMP cyclohydrolase (125 aa).

D74 is a binding site for Mg(2+). Residue C75 coordinates Zn(2+). Positions 76 and 78 each coordinate Mg(2+). C92 and C99 together coordinate Zn(2+).

Belongs to the PRA-CH family. In terms of assembly, homodimer. Mg(2+) serves as cofactor. It depends on Zn(2+) as a cofactor.

It localises to the cytoplasm. It catalyses the reaction 1-(5-phospho-beta-D-ribosyl)-5'-AMP + H2O = 1-(5-phospho-beta-D-ribosyl)-5-[(5-phospho-beta-D-ribosylamino)methylideneamino]imidazole-4-carboxamide. Its pathway is amino-acid biosynthesis; L-histidine biosynthesis; L-histidine from 5-phospho-alpha-D-ribose 1-diphosphate: step 3/9. Functionally, catalyzes the hydrolysis of the adenine ring of phosphoribosyl-AMP. In Syntrophotalea carbinolica (strain DSM 2380 / NBRC 103641 / GraBd1) (Pelobacter carbinolicus), this protein is Phosphoribosyl-AMP cyclohydrolase.